Here is a 413-residue protein sequence, read N- to C-terminus: F-box/kelch-repeat protein At5g26960 (413 aa).

One can recognise an F-box domain in the interval 41-90 (SATIASLPDDLLLECISRVPSSSIPSLAVVCRRWSRLLHSPYFLHLRRRL). 5 Kelch repeats span residues 96-141 (SLFA…YGSL), 152-191 (RVYV…VVSG), 192-238 (KIYV…AVDG), 240-295 (FYVI…AAVG), and 367-413 (LLRR…CVEW).

The polypeptide is F-box/kelch-repeat protein At5g26960 (Arabidopsis thaliana (Mouse-ear cress)).